The primary structure comprises 1324 residues: Structural maintenance of chromosomes protein 4 (1324 aa).

The tract at residues 1–24 (MSDKGIFRTSSTPSIVDVTPDRGE) is disordered. Threonine 19 is modified (phosphothreonine; by CDC2). Residue 155–162 (GPNGSGKS) coordinates ATP. 2 coiled-coil regions span residues 310–337 (QELSNSDDICAEKESRLKLVLSEKAKLE) and 370–628 (NKKT…KASL). Residues 651-764 (NGFFGRLGDL…KNLEQANRIA (114 aa)) form the SMC hinge domain. 2 coiled-coil regions span residues 825-1077 (YRQH…MSNL) and 1297-1324 (LSSRLVGIYKTANMTKSVTINNKEILTD).

It belongs to the SMC family. SMC4 subfamily. In terms of assembly, forms a heterodimer with cut14/smc2. Component of the condensin complex, which contains the smc2 and smc4 heterodimer, and three non smc subunits that probably regulate the complex: cnd1, cnd2 and cnd3. Interacts with C1739.07. Phosphorylated by CDC2 on Thr-19 at metaphase.

It is found in the nucleus. Its subcellular location is the cytoplasm. The protein resides in the chromosome. Central component of the condensin complex, a complex required for conversion of interphase chromatin into mitotic-like condense chromosomes. The condensin complex probably introduces positive supercoils into relaxed DNA in the presence of type I topoisomerases and converts nicked DNA into positive knotted forms in the presence of type II topoisomerases. This is Structural maintenance of chromosomes protein 4 (cut3) from Schizosaccharomyces pombe (strain 972 / ATCC 24843) (Fission yeast).